We begin with the raw amino-acid sequence, 34 residues long: Photosystem II reaction center protein M (34 aa).

A helical transmembrane segment spans residues 7–27 (GFIATILFVLVPTVFLLILYI).

The protein belongs to the PsbM family. PSII is composed of 1 copy each of membrane proteins PsbA, PsbB, PsbC, PsbD, PsbE, PsbF, PsbH, PsbI, PsbJ, PsbK, PsbL, PsbM, PsbT, PsbX, PsbY, PsbZ, Psb30/Ycf12, peripheral proteins PsbO, CyanoQ (PsbQ), PsbU, PsbV and a large number of cofactors. It forms dimeric complexes.

It is found in the cellular thylakoid membrane. Functionally, one of the components of the core complex of photosystem II (PSII). PSII is a light-driven water:plastoquinone oxidoreductase that uses light energy to abstract electrons from H(2)O, generating O(2) and a proton gradient subsequently used for ATP formation. It consists of a core antenna complex that captures photons, and an electron transfer chain that converts photonic excitation into a charge separation. This subunit is found at the monomer-monomer interface. This Picosynechococcus sp. (strain ATCC 27264 / PCC 7002 / PR-6) (Agmenellum quadruplicatum) protein is Photosystem II reaction center protein M.